The following is a 168-amino-acid chain: Mediator of RNA polymerase II transcription subunit 7a (168 aa).

Coiled-coil stretches lie at residues 64-92 (KDSN…ADVL) and 132-166 (IMEL…LTLD).

The protein belongs to the Mediator complex subunit 7 family. As to quaternary structure, component of the Mediator complex. Interacts with MEE14/CBP1.

It localises to the nucleus. Its function is as follows. Component of the Mediator complex, a coactivator involved in the regulated transcription of nearly all RNA polymerase II-dependent genes. Mediator functions as a bridge to convey information from gene-specific regulatory proteins to the basal RNA polymerase II transcription machinery. The Mediator complex, having a compact conformation in its free form, is recruited to promoters by direct interactions with regulatory proteins and serves for the assembly of a functional pre-initiation complex with RNA polymerase II and the general transcription factors. The sequence is that of Mediator of RNA polymerase II transcription subunit 7a (MED7A) from Arabidopsis thaliana (Mouse-ear cress).